The sequence spans 788 residues: MGIELLCLFFLCLGRNDHVQGGCAVGGAETCEDCLLIGPQCAWCSQENFTHLSGVGERCDTPANLLAKGCQLTFIENPVSQVEILTNKPLSIGRQKNSSDIVQISPQSLALKLRPGLEQTLQVQVRQTEDYPVDLYYLMDLSASMDDDLNTIKELGSLLSKEMSKLTSNFRLGFGSFVEKPISPFMKTTPEEIANPCSSIPYFCLPTFGFKHILPLTNDAERFNEIVKNQKISANIDTPEGGFDAIMQAAVCKEKIGWRNDSLHLLVFVSDADSHFGMDSKLAGIVIPNDGLCHLDSKNEYSMSTILEYPTIGQLIDKLVQNNVLLIFAVTQEQVHLYENYAKLIPGATVGVLQKDSGNILQLIISAYEELRSEVELEVLGDTEGLNLSFTAICNTGIPVPHQKKCSHMKVGDTASFNVTVSLPNCERRSRHIILKPVGLGDALEILVSPECSCDCQKEVEVNSSKCNNGNGSFQCGVCACHPGHMGHHCECGEDTLSTESCKEAPGRPSCSGRGDCYCGQCVCHLSPYGNIYGPYCQCDNFSCVRHKGLLCGDNGDCDCGECVCRSGWTGEYCNCTTSTDPCVSEDGILCSGRGDCVCGKCICTNPGASGPTCERCPTCGDPCNSKRSCIECYLSADGQAQEECVDKCKLAGATINEEEDFSKDSFVSCSLQGENECLITFLLTTDNEGKTVIHSINEKDCPKPPNIPMIMLGVSLAILLIGVVLLCIWKLLVSFHDRKEVAKFEAERSKAKWQTGTNPLYRGSTSTFKNVTYKHKEKQKVDLSTDG.

The signal sequence occupies residues 1-21; sequence MGIELLCLFFLCLGRNDHVQG. Residues 22-71 enclose the PSI domain; it reads GCAVGGAETCEDCLLIGPQCAWCSQENFTHLSGVGERCDTPANLLAKGCQ. At 22 to 709 the chain is on the extracellular side; it reads GCAVGGAETC…KDCPKPPNIP (688 aa). Cystine bridges form between cysteine 23–cysteine 41, cysteine 31–cysteine 454, cysteine 34–cysteine 59, cysteine 44–cysteine 70, cysteine 197–cysteine 204, cysteine 252–cysteine 293, cysteine 394–cysteine 406, cysteine 426–cysteine 452, cysteine 456–cysteine 476, cysteine 467–cysteine 479, cysteine 481–cysteine 490, cysteine 492–cysteine 519, cysteine 502–cysteine 517, cysteine 511–cysteine 522, cysteine 524–cysteine 537, cysteine 539–cysteine 560, cysteine 544–cysteine 558, cysteine 552–cysteine 563, and cysteine 565–cysteine 574. Asparagine 48 and asparagine 97 each carry an N-linked (GlcNAc...) asparagine glycan. Residues 131 to 371 enclose the VWFA domain; sequence YPVDLYYLMD…QLIISAYEEL (241 aa). 3 residues coordinate Mg(2+): aspartate 140, serine 142, and serine 144. Serine 144, aspartate 147, aspartate 148, and glutamate 179 together coordinate Ca(2+). Positions 235, 237, 239, and 240 each coordinate Ca(2+). Mg(2+) is bound at residue glutamate 240. Asparagine 260 carries an N-linked (GlcNAc...) asparagine glycan. Ca(2+) is bound by residues aspartate 271 and lysine 355. N-linked (GlcNAc...) asparagine glycosylation occurs at asparagine 387. Asparagine 418 carries N-linked (GlcNAc...) asparagine glycosylation. I-EGF domains follow at residues 456 to 491, 492 to 538, 539 to 575, and 576 to 615; these read CQKE…HHCE, CGED…PYCQ, CDNF…EYCN, and CTTS…PTCE. N-linked (GlcNAc...) asparagine glycans are attached at residues asparagine 463 and asparagine 471. Asparagine 541 carries an N-linked (GlcNAc...) asparagine glycan. An N-linked (GlcNAc...) asparagine glycan is attached at asparagine 575. Cystine bridges form between cysteine 576-cysteine 599, cysteine 583-cysteine 597, cysteine 591-cysteine 602, cysteine 604-cysteine 614, cysteine 617-cysteine 620, cysteine 624-cysteine 670, cysteine 630-cysteine 649, cysteine 633-cysteine 645, and cysteine 678-cysteine 702. Residues 710-730 form a helical membrane-spanning segment; that stretch reads MIMLGVSLAILLIGVVLLCIW. Residues 731 to 758 are interaction with HAX1; sequence KLLVSFHDRKEVAKFEAERSKAKWQTGT. Topologically, residues 731-788 are cytoplasmic; it reads KLLVSFHDRKEVAKFEAERSKAKWQTGTNPLYRGSTSTFKNVTYKHKEKQKVDLSTDG.

This sequence belongs to the integrin beta chain family. Heterodimer of an alpha and a beta subunit. Interacts with FLNB. Interacts with HAX1. ITGAV:ITGB6 interacts with FBN1. ITGAV:ITGB6 interacts with TGFB1.

Its subcellular location is the cell membrane. It is found in the cell junction. The protein resides in the focal adhesion. Functionally, integrin alpha-V:beta-6 (ITGAV:ITGB6) is a receptor for fibronectin and cytotactin. It recognizes the sequence R-G-D in its ligands. ITGAV:ITGB6 acts as a receptor for fibrillin-1 (FBN1) and mediates R-G-D-dependent cell adhesion to FBN1. Integrin alpha-V:beta-6 (ITGAV:ITGB6) mediates R-G-D-dependent release of transforming growth factor beta-1 (TGF-beta-1) from regulatory Latency-associated peptide (LAP), thereby playing a key role in TGF-beta-1 activation. The sequence is that of Integrin beta-6 (ITGB6) from Bos taurus (Bovine).